The primary structure comprises 525 residues: GMP synthase [glutamine-hydrolyzing] (525 aa).

The Glutamine amidotransferase type-1 domain maps to 8–207 (KILILDFGSQ…ALDICGCAAN (200 aa)). The active-site Nucleophile is the C85. Active-site residues include H181 and E183. Residues 208–400 (WKPSSIIEDA…LGLPYNMLYR (193 aa)) form the GMPS ATP-PPase domain. 235-241 (SGGVDSS) provides a ligand contact to ATP.

Homodimer.

The enzyme catalyses XMP + L-glutamine + ATP + H2O = GMP + L-glutamate + AMP + diphosphate + 2 H(+). The protein operates within purine metabolism; GMP biosynthesis; GMP from XMP (L-Gln route): step 1/1. Functionally, catalyzes the synthesis of GMP from XMP. This chain is GMP synthase [glutamine-hydrolyzing], found in Shewanella sp. (strain MR-7).